The sequence spans 150 residues: UPF0178 protein Shew_2726 (150 aa).

This sequence belongs to the UPF0178 family.

The sequence is that of UPF0178 protein Shew_2726 from Shewanella loihica (strain ATCC BAA-1088 / PV-4).